Reading from the N-terminus, the 180-residue chain is E1B protein, small T-antigen (180 aa).

A disordered region spans residues 142-180; the sequence is GPAAPLARQGSQQEEQQQRQEEEQVQEEMRSGLDPPTEN. Residues 157–172 show a composition bias toward basic and acidic residues; the sequence is QQQRQEEEQVQEEMRS.

Belongs to the adenoviridae E1B 19 kDa protein family.

The sequence is that of E1B protein, small T-antigen from Simian adenovirus serotype 7 (SAdV-7).